We begin with the raw amino-acid sequence, 298 residues long: MDAHLENGAGIDVVLVTGLSGAGRGTAAKVLEDLGWYVADNLPPQLITRMVDLGMDAGSRITQLAVVMDVRSRGFTGDLDSVRTELATRNIAPRVVFMEASDDMLVRRYEQNRRSHPLQGDQTLAEGIAAERRMLAPVRATADLIIDTSTLSVRALRETIERAFGGGASATISVTVESFGFKYGLPMDADMVMDVRFLPNPHWVDELRPRTGQDPAVRDYVLGQPGAAEFLDAYHRLLSLVVDGYRREGKRYMTIAIGCTGGKHRSVAIAEALMQRLQAQHGEAQLSVRVLHRDLGRE.

18 to 25 (GLSGAGRG) is a binding site for ATP. 69–72 (DVRS) lines the GTP pocket.

It belongs to the RapZ-like family.

Displays ATPase and GTPase activities. The polypeptide is Nucleotide-binding protein MAV_3359 (Mycobacterium avium (strain 104)).